A 103-amino-acid chain; its full sequence is Cell division protein FtsB (103 aa).

Over 1–3 (MGK) the chain is Cytoplasmic. The chain crosses the membrane as a helical span at residues 4–21 (LTLLLLALLVWLQYSLWF). Residues 22–103 (GKNGIHDYSR…RAATAGQTHR (82 aa)) are Periplasmic-facing. A coiled-coil region spans residues 33–62 (NDDVVAQQATNAKLKARNDQLFAEIDDLNG).

Belongs to the FtsB family. Part of a complex composed of FtsB, FtsL and FtsQ.

The protein resides in the cell inner membrane. Functionally, essential cell division protein. May link together the upstream cell division proteins, which are predominantly cytoplasmic, with the downstream cell division proteins, which are predominantly periplasmic. This chain is Cell division protein FtsB, found in Salmonella agona (strain SL483).